Consider the following 278-residue polypeptide: MALKTFKPVTPSLRQLVIVDRSELYKGKPVKALTEGKISSGGRNNLGRVTVRFRGGGHKRTLRNVDFKRREFAGKVGTVERIEYDPNRTAFIALVSYEGGGQSYILAPQRVKAGDRVVSGEQVDIKPGNAMPIGNMPVGTIVHNVELKIGKGGALARSAGNYAQIVGRDQGYVTLRLNSGEQRLVHGQCYATVGAVSNPDHMNISLGKAGRKRWLGRRPHNRGVAMNPIDHPHGGGEGRTSGGRHPVTPWGFPTKGKKTRSNKRTDTFIVSSRHNRKK.

The segment at 223-278 is disordered; sequence GVAMNPIDHPHGGGEGRTSGGRHPVTPWGFPTKGKKTRSNKRTDTFIVSSRHNRKK.

It belongs to the universal ribosomal protein uL2 family. Part of the 50S ribosomal subunit. Forms a bridge to the 30S subunit in the 70S ribosome.

In terms of biological role, one of the primary rRNA binding proteins. Required for association of the 30S and 50S subunits to form the 70S ribosome, for tRNA binding and peptide bond formation. It has been suggested to have peptidyltransferase activity; this is somewhat controversial. Makes several contacts with the 16S rRNA in the 70S ribosome. This Methylobacterium sp. (strain 4-46) protein is Large ribosomal subunit protein uL2.